The sequence spans 842 residues: Oleate activated transcription factor 3 (842 aa).

Positions 22 to 50 form a DNA-binding region, zn(2)-C6 fungal-type; the sequence is CTNCKRRKSKCDRQNPCSNCVRFGNKDTC. Residues 55-101 form a disordered region; sequence NPKNTESQHGEDTDNKVKKQQPQMIKGKRNGTSSSIVGSKASSISPT. Residues 60–71 show a composition bias toward basic and acidic residues; the sequence is ESQHGEDTDNKV. Positions 87–99 are enriched in low complexity; that stretch reads SSSIVGSKASSIS.

The protein belongs to the OAF3 family.

The protein localises to the cytoplasm. It localises to the nucleus. It is found in the mitochondrion. Transcriptional inhibitor with a significantly increased number of target genes in response to oleate. This is Oleate activated transcription factor 3 (OAF3) from Zygosaccharomyces rouxii (strain ATCC 2623 / CBS 732 / NBRC 1130 / NCYC 568 / NRRL Y-229).